The primary structure comprises 55 residues: uncharacterized protein (55 aa).

Residues 1–22 (MPALKSHVRPNSAAPARRQPWP) are disordered.

This is an uncharacterized protein from Rhodobacter capsulatus (Rhodopseudomonas capsulata).